The chain runs to 405 residues: Acetylornithine aminotransferase 1 (405 aa).

Pyridoxal 5'-phosphate is bound by residues 103 to 104 (GA) and F136. Residue R139 coordinates N(2)-acetyl-L-ornithine. 221–224 (DEVQ) lines the pyridoxal 5'-phosphate pocket. K250 carries the N6-(pyridoxal phosphate)lysine modification. S278 serves as a coordination point for N(2)-acetyl-L-ornithine. Residue T279 coordinates pyridoxal 5'-phosphate.

It belongs to the class-III pyridoxal-phosphate-dependent aminotransferase family. ArgD subfamily. In terms of assembly, homodimer. Pyridoxal 5'-phosphate serves as cofactor.

It is found in the cytoplasm. The catalysed reaction is N(2)-acetyl-L-ornithine + 2-oxoglutarate = N-acetyl-L-glutamate 5-semialdehyde + L-glutamate. Its pathway is amino-acid biosynthesis; L-arginine biosynthesis; N(2)-acetyl-L-ornithine from L-glutamate: step 4/4. The chain is Acetylornithine aminotransferase 1 from Bradyrhizobium diazoefficiens (strain JCM 10833 / BCRC 13528 / IAM 13628 / NBRC 14792 / USDA 110).